The sequence spans 425 residues: Podosporapepsin (425 aa).

The N-terminal stretch at 1-28 (MVSLTDLFLASLLVPTSPWLCLPPRIDT) is a signal peptide. The propeptide at 29–91 (IDQRGGRVTL…QEEAFARIKR (63 aa)) is activation peptide. The 312-residue stretch at 108–419 (YVTPVTIGTP…GTNPPRIGFA (312 aa)) folds into the Peptidase A1 domain. The active site involves D126. 2 N-linked (GlcNAc...) asparagine glycosylation sites follow: N184 and N273. D310 is an active-site residue. The cysteines at positions 346 and 381 are disulfide-linked. N-linked (GlcNAc...) asparagine glycosylation is present at N370.

Belongs to the peptidase A1 family.

The chain is Podosporapepsin (PAPA) from Podospora anserina (Pleurage anserina).